Reading from the N-terminus, the 352-residue chain is Protein Wnt-3a (352 aa).

The signal sequence occupies residues 1-18 (MASFGYFLFLCGLSQALS). A disulfide bond links Cys-77 and Cys-88. Residues Asn-87 and Asn-92 are each glycosylated (N-linked (GlcNAc...) asparagine). Disulfide bonds link Cys-128–Cys-136, Cys-138–Cys-155, Cys-203–Cys-217, Cys-205–Cys-212, Cys-281–Cys-312, Cys-297–Cys-307, Cys-311–Cys-351, Cys-327–Cys-342, Cys-329–Cys-339, and Cys-334–Cys-335. Ser-209 carries O-palmitoleoyl serine; by PORCN lipidation. Asn-298 is a glycosylation site (N-linked (GlcNAc...) asparagine).

Belongs to the Wnt family. Palmitoleoylation is required for efficient binding to frizzled receptors. Depalmitoleoylation leads to inhibit the Wnt signaling pathway. Post-translationally, disulfide bonds have critical and distinct roles in secretion and activity. Loss of each conserved cysteine in WNT3A results in high molecular weight oxidized Wnt oligomers, which are formed through inter-Wnt disulfide bonding. Expressed in cornea. Isoform 1 is expressed in the primitive streak, dorsal neural tube, proximal otic vesicle, the apical ectodermal ridge and the epithelium of feather buds.

It is found in the secreted. It localises to the extracellular space. The protein resides in the extracellular matrix. The protein localises to the cytoplasm. Ligand for members of the frizzled family of seven transmembrane receptors. Functions in the canonical Wnt signaling pathway that results in activation of transcription factors of the TCF/LEF family. Regulates chick apical ectodermal ridge formation. Required for normal embryonic mesoderm development and formation of caudal somites. Required for normal morphogenesis of the developing neural tube. In Gallus gallus (Chicken), this protein is Protein Wnt-3a (WNT3A).